A 251-amino-acid chain; its full sequence is 1-(5-phosphoribosyl)-5-[(5-phosphoribosylamino)methylideneamino] imidazole-4-carboxamide isomerase (251 aa).

Asp-8 acts as the Proton acceptor in catalysis. Asp-131 functions as the Proton donor in the catalytic mechanism.

Belongs to the HisA/HisF family.

It localises to the cytoplasm. The catalysed reaction is 1-(5-phospho-beta-D-ribosyl)-5-[(5-phospho-beta-D-ribosylamino)methylideneamino]imidazole-4-carboxamide = 5-[(5-phospho-1-deoxy-D-ribulos-1-ylimino)methylamino]-1-(5-phospho-beta-D-ribosyl)imidazole-4-carboxamide. Its pathway is amino-acid biosynthesis; L-histidine biosynthesis; L-histidine from 5-phospho-alpha-D-ribose 1-diphosphate: step 4/9. The protein is 1-(5-phosphoribosyl)-5-[(5-phosphoribosylamino)methylideneamino] imidazole-4-carboxamide isomerase of Burkholderia ambifaria (strain MC40-6).